We begin with the raw amino-acid sequence, 94 residues long: Co-chaperonin GroES (94 aa).

This sequence belongs to the GroES chaperonin family. As to quaternary structure, heptamer of 7 subunits arranged in a ring. Interacts with the chaperonin GroEL.

It is found in the cytoplasm. In terms of biological role, together with the chaperonin GroEL, plays an essential role in assisting protein folding. The GroEL-GroES system forms a nano-cage that allows encapsulation of the non-native substrate proteins and provides a physical environment optimized to promote and accelerate protein folding. GroES binds to the apical surface of the GroEL ring, thereby capping the opening of the GroEL channel. The protein is Co-chaperonin GroES of Ehrlichia ruminantium (strain Gardel).